The chain runs to 31 residues: MGITSTQIYIALLTALIPAFFALKLGRELNK.

A helical transmembrane segment spans residues 7-26; it reads QIYIALLTALIPAFFALKLG.

This sequence belongs to the PsaM family.

It localises to the plastid. Its subcellular location is the chloroplast thylakoid membrane. The sequence is that of Photosystem I reaction center subunit XII from Euglena mutabilis.